The sequence spans 359 residues: MNIYDQLQAVEDRYEELGELLSDPDVVSDTKRFMELSKEEASNRDTVIAYREYKQVLQNIVDAEEMIKESGGDADLEEMAKQELKDAKAEKEEYEEKLKILLLPKDPNDDKNIILEIRGAAGGDEAALFAGDLLTMYQKYAEAQGWRFEVMEASMNGVGGFKEVVAMVSGQSVYSKLKYESGAHRVQRVPVTESQGRVHTSTATVLVMLEVEEVEYDIDPKDLRVDIYHASGAGGQNVNKVATAVRIVHLPTNIKVEMQEERTQQKNREKAMKIIRARVADHFAQIAQDEQDAERKSTIGTGDRSERIRTYNFPQNRVTDHRIGLTLQKLDTILSGKLDEVVDALVLYDQTQKLEELNK.

N5-methylglutamine is present on glutamine 236.

Belongs to the prokaryotic/mitochondrial release factor family. In terms of processing, methylated by PrmC. Methylation increases the termination efficiency of RF1.

Its subcellular location is the cytoplasm. Peptide chain release factor 1 directs the termination of translation in response to the peptide chain termination codons UAG and UAA. This Streptococcus pneumoniae (strain Taiwan19F-14) protein is Peptide chain release factor 1.